The following is a 112-amino-acid chain: Large ribosomal subunit protein eL33y (112 aa).

Belongs to the eukaryotic ribosomal protein eL33 family.

The polypeptide is Large ribosomal subunit protein eL33y (RPL35AC) (Arabidopsis thaliana (Mouse-ear cress)).